Reading from the N-terminus, the 1726-residue chain is Protein Shroom2 (1726 aa).

A PDZ domain is found at 79-159 (AGGCYSYWRG…ILKMIVKRRN (81 aa)). 4 disordered regions span residues 294–373 (DNTK…RSDS), 425–451 (RTVA…LSPY), 657–676 (FSQL…DYSW), and 697–785 (EGRN…STYR). The span at 318 to 328 (VLQSTSINETS) shows a compositional bias: polar residues. Residues 329–338 (KIQRTEDNTE) are compositionally biased toward basic and acidic residues. Positions 657–667 (FSQLDHSEKGS) are enriched in basic and acidic residues. 2 stretches are compositionally biased toward polar residues: residues 746–755 (SKSTAALTES) and 769–785 (LESM…STYR). Positions 788–877 (LQEAQARVLR…SEPEKINEVG (90 aa)) constitute an ASD1 domain. Disordered regions lie at residues 913 to 968 (PKVP…DKVT), 1007 to 1080 (LDAD…QCGA), 1092 to 1120 (KWKP…GTLP), 1166 to 1240 (FKKR…KNPS), 1269 to 1299 (SSKS…DKPP), and 1471 to 1499 (AQQR…VPSA). The span at 917-926 (PKVVSSSQSE) shows a compositional bias: low complexity. Residues 936–948 (DYAKSSEGQESKR) are compositionally biased toward basic and acidic residues. Polar residues-rich tracts occupy residues 1054 to 1070 (NSNS…SPTR) and 1104 to 1119 (ETSN…SGTL). Residues 1191–1205 (SSSSLATSSESLLTA) are compositionally biased toward low complexity. Residues 1209-1235 (RAQSYSPSSQDTFPPQSLQKQSPSTYP) show a composition bias toward polar residues. Residues 1427-1721 (EELVREIVDK…QLKCLTDSLP (295 aa)) form the ASD2 domain.

This sequence belongs to the shroom family. Interacts with F-actin.

The protein resides in the apical cell membrane. It localises to the cell junction. Its subcellular location is the tight junction. The protein localises to the cytoplasm. It is found in the cytoskeleton. In terms of biological role, may be involved in endothelial cell morphology changes during cell spreading. Required for eye pigmentation. In the retinal pigment epithelium, regulates the biogenesis of melanosomes and promotes their association with the apical cell surface by inducing gamma-tubulin redistribution. The sequence is that of Protein Shroom2 (shroom2) from Xenopus tropicalis (Western clawed frog).